Here is a 548-residue protein sequence, read N- to C-terminus: Fumarate hydratase class I, anaerobic (548 aa).

Cysteine 105 is a [4Fe-4S] cluster binding site. Lysine 192 carries the post-translational modification N6-acetyllysine. Cysteine 224 and cysteine 318 together coordinate [4Fe-4S] cluster.

It belongs to the class-I fumarase family. In terms of assembly, homodimer. It depends on [4Fe-4S] cluster as a cofactor.

It carries out the reaction (S)-malate = fumarate + H2O. The catalysed reaction is (S,S)-tartrate = oxaloacetate + H2O. In terms of biological role, catalyzes the reversible hydration of fumarate to (S)-malate. Functions in the generation of fumarate for use as an anaerobic electron acceptor. To a lesser extent, also displays D-tartrate dehydratase activity, but is not able to convert (R)-malate, L-tartrate or meso-tartrate. Is required for anaerobic growth on D-tartrate. This chain is Fumarate hydratase class I, anaerobic, found in Escherichia coli (strain K12).